A 260-amino-acid polypeptide reads, in one-letter code: Enoyl-[acyl-carrier-protein] reductase [NADH] FabI (260 aa).

NAD(+)-binding positions include Gly-15, 21-22 (SI), Gln-42, 66-67 (DV), and Met-94. Ala-97 contributes to the substrate binding site. Catalysis depends on proton acceptor residues Tyr-147 and Tyr-157. NAD(+) contacts are provided by residues Lys-164 and 193–197 (IKTLA).

This sequence belongs to the short-chain dehydrogenases/reductases (SDR) family. FabI subfamily. In terms of assembly, homotetramer.

It carries out the reaction a 2,3-saturated acyl-[ACP] + NAD(+) = a (2E)-enoyl-[ACP] + NADH + H(+). It functions in the pathway lipid metabolism; fatty acid biosynthesis. Functionally, catalyzes the reduction of a carbon-carbon double bond in an enoyl moiety that is covalently linked to an acyl carrier protein (ACP). Involved in the elongation cycle of fatty acid which are used in the lipid metabolism. This chain is Enoyl-[acyl-carrier-protein] reductase [NADH] FabI (fabI), found in Rickettsia felis (strain ATCC VR-1525 / URRWXCal2) (Rickettsia azadi).